A 282-amino-acid polypeptide reads, in one-letter code: MTKILYGNEVALKIKEDLNLRMDKLKEKNIIPKLAILRMGNKQDDIAYERSIIKSCEKLNIETKVEELNEDILEEDFLKLMENLNNEKDIHGILVFRPYPKHLNENIINSSIALNKDVDCMHPLNLERIFEGDLDGVMPCTPEAVIEILKYYDIDLKGKNIVIINRSMVVGKPLSMMVLSNNATVTICHSKTIDLPSITKKADIVVTAIGKAKLIKEEYFNENSIIIDVSINVDENGKLCGDVDFENVKEKVGAITPVPKGVGSVTTTLLLKHIVEAAERNS.

Residues 165–167, Ser-190, and Ile-231 contribute to the NADP(+) site; that span reads NRS.

It belongs to the tetrahydrofolate dehydrogenase/cyclohydrolase family. As to quaternary structure, homodimer.

It catalyses the reaction (6R)-5,10-methylene-5,6,7,8-tetrahydrofolate + NADP(+) = (6R)-5,10-methenyltetrahydrofolate + NADPH. It carries out the reaction (6R)-5,10-methenyltetrahydrofolate + H2O = (6R)-10-formyltetrahydrofolate + H(+). Its pathway is one-carbon metabolism; tetrahydrofolate interconversion. Its function is as follows. Catalyzes the oxidation of 5,10-methylenetetrahydrofolate to 5,10-methenyltetrahydrofolate and then the hydrolysis of 5,10-methenyltetrahydrofolate to 10-formyltetrahydrofolate. This Clostridium botulinum (strain Okra / Type B1) protein is Bifunctional protein FolD.